Here is an 846-residue protein sequence, read N- to C-terminus: Translation initiation factor IF-2 (846 aa).

The tract at residues 198-219 (YKREEEEKKSKAKKAGGKGFKK) is disordered. Residues 207-219 (SKAKKAGGKGFKK) show a composition bias toward basic residues. Residues 345–512 (SRAPVVTIMG…AVLLQSEVLE (168 aa)) form the tr-type G domain. A G1 region spans residues 354–361 (GHVDHGKT). 354-361 (GHVDHGKT) contacts GTP. The G2 stretch occupies residues 379-383 (GITQH). Residues 400–403 (DTPG) form a G3 region. GTP contacts are provided by residues 400–404 (DTPGH) and 454–457 (NKID). Residues 454 to 457 (NKID) form a G4 region. A G5 region spans residues 490 to 492 (SAK).

It belongs to the TRAFAC class translation factor GTPase superfamily. Classic translation factor GTPase family. IF-2 subfamily.

It is found in the cytoplasm. Its function is as follows. One of the essential components for the initiation of protein synthesis. Protects formylmethionyl-tRNA from spontaneous hydrolysis and promotes its binding to the 30S ribosomal subunits. Also involved in the hydrolysis of GTP during the formation of the 70S ribosomal complex. This chain is Translation initiation factor IF-2, found in Francisella tularensis subsp. novicida (strain U112).